The sequence spans 489 residues: Probable anthranilate synthase component 1 (489 aa).

Residues Ser-54 and Pro-262 to Met-264 each bind L-tryptophan. Position 297-298 (Gly-297–Thr-298) interacts with chorismate. Glu-324 provides a ligand contact to Mg(2+). A phosphoserine mark is found at Ser-390 and Ser-392. Chorismate contacts are provided by residues Tyr-412, Arg-433, Gly-447–Gly-449, and Gly-449. Residue Glu-462 coordinates Mg(2+). Position 488 is a phosphoserine (Ser-488).

This sequence belongs to the anthranilate synthase component I family. In terms of assembly, tetramer of two components I and two components II. Requires Mg(2+) as cofactor.

It carries out the reaction chorismate + L-glutamine = anthranilate + pyruvate + L-glutamate + H(+). It functions in the pathway amino-acid biosynthesis; L-tryptophan biosynthesis; L-tryptophan from chorismate: step 1/5. This chain is Probable anthranilate synthase component 1 (trp3), found in Schizosaccharomyces pombe (strain 972 / ATCC 24843) (Fission yeast).